The primary structure comprises 467 residues: Glutamate--tRNA ligase (467 aa).

Positions 10-20 match the 'HIGH' region motif; the sequence is PSPTGYLHVGG. 4 residues coordinate Zn(2+): Cys-99, Cys-101, Cys-126, and Glu-128. The 'KMSKS' region motif lies at 237–241; the sequence is RLSKR. Residue Lys-240 coordinates ATP.

It belongs to the class-I aminoacyl-tRNA synthetase family. Glutamate--tRNA ligase type 1 subfamily. As to quaternary structure, monomer. Zn(2+) is required as a cofactor.

It localises to the cytoplasm. It catalyses the reaction tRNA(Glu) + L-glutamate + ATP = L-glutamyl-tRNA(Glu) + AMP + diphosphate. Catalyzes the attachment of glutamate to tRNA(Glu) in a two-step reaction: glutamate is first activated by ATP to form Glu-AMP and then transferred to the acceptor end of tRNA(Glu). The polypeptide is Glutamate--tRNA ligase (Geotalea uraniireducens (strain Rf4) (Geobacter uraniireducens)).